Consider the following 1172-residue polypeptide: DNA-directed RNA polymerase subunit beta (1172 aa).

The protein belongs to the RNA polymerase beta chain family. As to quaternary structure, the RNAP catalytic core consists of 2 alpha, 1 beta, 1 beta' and 1 omega subunit. When a sigma factor is associated with the core the holoenzyme is formed, which can initiate transcription.

It carries out the reaction RNA(n) + a ribonucleoside 5'-triphosphate = RNA(n+1) + diphosphate. Its function is as follows. DNA-dependent RNA polymerase catalyzes the transcription of DNA into RNA using the four ribonucleoside triphosphates as substrates. In Pseudothermotoga lettingae (strain ATCC BAA-301 / DSM 14385 / NBRC 107922 / TMO) (Thermotoga lettingae), this protein is DNA-directed RNA polymerase subunit beta.